The chain runs to 278 residues: 3-oxoacyl-[acyl-carrier-protein] reductase (278 aa).

12 residues coordinate NADP(+): threonine 13, arginine 14, isoleucine 16, serine 36, serine 40, threonine 44, aspartate 66, phenylalanine 67, glutamate 77, glycine 122, glutamine 125, and glutamate 126. The active-site Proton donor is serine 182. NADP(+) contacts are provided by tyrosine 198, lysine 202, leucine 230, and valine 231. Catalysis depends on tyrosine 198, which acts as the Proton acceptor. Lysine 202 (lowers pKa of active site Tyr) is an active-site residue.

Belongs to the short-chain dehydrogenases/reductases (SDR) family.

The protein localises to the mitochondrion. The catalysed reaction is a (3R)-hydroxyacyl-[ACP] + NADP(+) = a 3-oxoacyl-[ACP] + NADPH + H(+). Its pathway is lipid metabolism; fatty acid biosynthesis. Its function is as follows. Involved in biosynthesis of fatty acids in mitochondria. This chain is 3-oxoacyl-[acyl-carrier-protein] reductase (OAR1), found in Saccharomyces cerevisiae (strain ATCC 204508 / S288c) (Baker's yeast).